We begin with the raw amino-acid sequence, 185 residues long: Peptidyl-tRNA hydrolase (185 aa).

TRNA is bound at residue tyrosine 14. The active-site Proton acceptor is the histidine 19. Tyrosine 65, asparagine 67, and asparagine 113 together coordinate tRNA.

It belongs to the PTH family. In terms of assembly, monomer.

It localises to the cytoplasm. The catalysed reaction is an N-acyl-L-alpha-aminoacyl-tRNA + H2O = an N-acyl-L-amino acid + a tRNA + H(+). In terms of biological role, hydrolyzes ribosome-free peptidyl-tRNAs (with 1 or more amino acids incorporated), which drop off the ribosome during protein synthesis, or as a result of ribosome stalling. Functionally, catalyzes the release of premature peptidyl moieties from peptidyl-tRNA molecules trapped in stalled 50S ribosomal subunits, and thus maintains levels of free tRNAs and 50S ribosomes. The chain is Peptidyl-tRNA hydrolase from Rickettsia rickettsii (strain Iowa).